We begin with the raw amino-acid sequence, 632 residues long: X-ray repair cross-complementing protein 5 (632 aa).

R52 functions as the Schiff-base intermediate with DNA; for 5'-deoxyribose-5-phosphate lyase activity in the catalytic mechanism. One can recognise a Ku domain in the interval 283–490; that stretch reads LYLNKDLSFS…VDKMKGIIQK (208 aa). The segment at 555-578 is disordered; the sequence is DYSPEGKAAKRKQAGDAQAEKRPK. Residues 595 to 629 enclose the SAP domain; it reads LGKLTVSALKDTCRHYGLRSGGKKQELIDALTEYF.

The protein belongs to the ku70 family. In terms of assembly, heterodimer composed of XRCC5/Ku80 and XRCC6/Ku70. Component of the core long-range non-homologous end joining (NHEJ) complex (also named DNA-PK complex) composed of PRKDC, LIG4, XRCC4, XRCC6/Ku70, XRCC5/Ku86 and NHEJ1/XLF. Additional component of the NHEJ complex includes PAXX. Following autophosphorylation, PRKDC dissociates from DNA, leading to formation of the short-range NHEJ complex, composed of LIG4, XRCC4, XRCC6/Ku70, XRCC5/Ku86 and NHEJ1/XLF. Phosphorylated on serine residues.

It is found in the nucleus. The protein resides in the chromosome. Functionally, single-stranded DNA-dependent ATP-dependent helicase that plays a key role in DNA non-homologous end joining (NHEJ) by recruiting DNA-PK to DNA. Required for double-strand break repair and V(D)J recombination. Also has a role in chromosome translocation. Has a role in chromosome translocation. The DNA helicase II complex binds preferentially to fork-like ends of double-stranded DNA in a cell cycle-dependent manner. It works in the 3'-5' direction. During NHEJ, the XRCC5-XRRC6 dimer performs the recognition step: it recognizes and binds to the broken ends of the DNA and protects them from further resection. Binding to DNA may be mediated by XRCC6. The XRCC5-XRRC6 dimer acts as a regulatory subunit of the DNA-dependent protein kinase complex DNA-PK by increasing the affinity of the catalytic subunit PRKDC to DNA by 100-fold. The XRCC5-XRRC6 dimer is probably involved in stabilizing broken DNA ends and bringing them together. The assembly of the DNA-PK complex to DNA ends is required for the NHEJ ligation step. Probably also acts as a 5'-deoxyribose-5-phosphate lyase (5'-dRP lyase), by catalyzing the beta-elimination of the 5' deoxyribose-5-phosphate at an abasic site near double-strand breaks. 5'-dRP lyase activity allows to 'clean' the termini of abasic sites, a class of nucleotide damage commonly associated with strand breaks, before such broken ends can be joined. The XRCC5-XRRC6 dimer together with APEX1 acts as a negative regulator of transcription. This chain is X-ray repair cross-complementing protein 5 (XRCC6), found in Gallus gallus (Chicken).